We begin with the raw amino-acid sequence, 707 residues long: Molybdenum cofactor sulfurase (707 aa).

Lysine 206 is subject to N6-(pyridoxal phosphate)lysine. Cysteine 365 is an active-site residue. Residues 558-705 (QWLENALDMT…VEAGSAVRFF (148 aa)) form the MOSC domain.

Belongs to the class-V pyridoxal-phosphate-dependent aminotransferase family. MOCOS subfamily. The cofactor is pyridoxal 5'-phosphate.

The enzyme catalyses Mo-molybdopterin + L-cysteine + AH2 = thio-Mo-molybdopterin + L-alanine + A + H2O. Its pathway is cofactor biosynthesis; molybdopterin biosynthesis. Functionally, sulfurates the molybdenum cofactor. Sulfation of molybdenum is essential for xanthine dehydrogenase (XDH) and aldehyde oxidase (ADO) enzymes in which molybdenum cofactor is liganded by 1 oxygen and 1 sulfur atom in active form. In Caenorhabditis briggsae, this protein is Molybdenum cofactor sulfurase (mocs-1).